The sequence spans 266 residues: L-cystine-binding protein TcyJ (266 aa).

The signal sequence occupies residues 1–29 (MKLAHLGRQALMGVMAVALVAGMSVKSFA).

This sequence belongs to the bacterial solute-binding protein 3 family. As to quaternary structure, the complex is composed of two ATP-binding proteins (TcyN), two transmembrane proteins (TcyL) and a solute-binding protein (TcyJ).

The protein localises to the periplasm. Its function is as follows. Part of the ABC transporter complex TcyJLN involved in L-cystine import. Binds cystine. The protein is L-cystine-binding protein TcyJ of Escherichia coli O6:H1 (strain CFT073 / ATCC 700928 / UPEC).